The chain runs to 1010 residues: Phosphoenolpyruvate carboxylase (1010 aa).

A compositionally biased stretch (polar residues) spans 1–18 (MIMRSPETSGASMPQSTA). Disordered stretches follow at residues 1-36 (MIMRSPETSGASMPQSTAHVPDGEQPRASGGSPGAG) and 132-154 (LRPSRSQDDETAAPFDPFAPPLA). Catalysis depends on residues His-195 and Lys-652. Residues 967–986 (QNRQPPMSESPGTPEDRRTY) form a disordered region.

It belongs to the PEPCase type 1 family. It depends on Mg(2+) as a cofactor.

It catalyses the reaction oxaloacetate + phosphate = phosphoenolpyruvate + hydrogencarbonate. Forms oxaloacetate, a four-carbon dicarboxylic acid source for the tricarboxylic acid cycle. In Parasynechococcus marenigrum (strain WH8102), this protein is Phosphoenolpyruvate carboxylase.